The sequence spans 516 residues: Probable serine/threonine-protein kinase DDB_G0293276 (516 aa).

A disordered region spans residues 69–115 (SIEIDDENPYNTNNNNNSNNNNNNNNNNCNNSNNSNNNKNINSLDNI). Residues 79–115 (NTNNNNNSNNNNNNNNNNCNNSNNSNNNKNINSLDNI) are compositionally biased toward low complexity. Residues 232 to 479 (YKHVECIGKG…SKDIKNHPYF (248 aa)) form the Protein kinase domain. ATP is bound by residues 238–246 (IGKGGYGVV) and Lys261. The Proton acceptor role is filled by Asp350.

Belongs to the protein kinase superfamily. AGC Ser/Thr protein kinase family.

It carries out the reaction L-seryl-[protein] + ATP = O-phospho-L-seryl-[protein] + ADP + H(+). The enzyme catalyses L-threonyl-[protein] + ATP = O-phospho-L-threonyl-[protein] + ADP + H(+). This chain is Probable serine/threonine-protein kinase DDB_G0293276, found in Dictyostelium discoideum (Social amoeba).